Consider the following 175-residue polypeptide: NADH-ubiquinone oxidoreductase chain 6 (175 aa).

5 helical membrane-spanning segments follow: residues 1 to 21 (MMTY…VGFS), 25 to 45 (SPIY…GIIM), 47 to 67 (FGGS…MLVV), 88 to 108 (TVMG…LYVL), and 149 to 169 (YGAW…LVIL).

The protein belongs to the complex I subunit 6 family. Core subunit of respiratory chain NADH dehydrogenase (Complex I) which is composed of 45 different subunits.

It localises to the mitochondrion inner membrane. It carries out the reaction a ubiquinone + NADH + 5 H(+)(in) = a ubiquinol + NAD(+) + 4 H(+)(out). Its function is as follows. Core subunit of the mitochondrial membrane respiratory chain NADH dehydrogenase (Complex I) which catalyzes electron transfer from NADH through the respiratory chain, using ubiquinone as an electron acceptor. Essential for the catalytic activity and assembly of complex I. The protein is NADH-ubiquinone oxidoreductase chain 6 (MT-ND6) of Equus asinus (Donkey).